A 201-amino-acid polypeptide reads, in one-letter code: Alanine--tRNA ligase (201 aa).

The protein belongs to the class-II aminoacyl-tRNA synthetase family. It depends on Zn(2+) as a cofactor.

It is found in the cytoplasm. The enzyme catalyses tRNA(Ala) + L-alanine + ATP = L-alanyl-tRNA(Ala) + AMP + diphosphate. Catalyzes the attachment of alanine to tRNA(Ala) in a two-step reaction: alanine is first activated by ATP to form Ala-AMP and then transferred to the acceptor end of tRNA(Ala). Also edits incorrectly charged Ser-tRNA(Ala) and Gly-tRNA(Ala) via its editing domain. This is Alanine--tRNA ligase (alaS) from Rhizobium leguminosarum bv. viciae.